The chain runs to 225 residues: Membrin-11 (225 aa).

A2 is subject to N-acetylalanine. At A2 to R200 the chain is on the cytoplasmic side. The helical; Anchor for type IV membrane protein transmembrane segment at V201–I221 threads the bilayer. Over R222–R225 the chain is Vesicular.

The protein belongs to the GOSR2 family.

The protein resides in the golgi apparatus membrane. Its function is as follows. Involved in transport of proteins from the cis/medial-Golgi to the trans-Golgi network. The chain is Membrin-11 (MEMB11) from Arabidopsis thaliana (Mouse-ear cress).